The primary structure comprises 1253 residues: Structural polyprotein (1253 aa).

Positions 37–71 (FQAQQMQQLISAVNALTMRQNAIAPARPPKPKKKK) are host transcription inhibition. Residues 58–109 (AIAPARPPKPKKKKTTKPKPKTQPKKINGKTQQQKKKDKQADKKKKKPGKRE) are disordered. The Nuclear localization signal signature appears at 64–105 (PPKPKKKKTTKPKPKTQPKKINGKTQQQKKKDKQADKKKKKP). The segment covering 65-107 (PKPKKKKTTKPKPKTQPKKINGKTQQQKKKDKQADKKKKKPGK) has biased composition (basic residues). The segment at 87–120 (KTQQQKKKDKQADKKKKKPGKRERMCMKIENDCI) is binding to the viral RNA. Residues 105–119 (PGKRERMCMKIENDC) are ribosome-binding. An intrachain disulfide couples Cys-119 to Cys-134. The Peptidase S3 domain occupies 119-267 (CIFEVKHEGK…RVTPEGSEEW (149 aa)). The Charge relay system role is filled by His-145. Residues 150–160 (IDNADLAKLAF) carry the Nuclear export signal motif. Positions 161-166 (KKSSKY) are interaction with spike glycoprotein E2. The active-site Charge relay system is Asp-167. Positions 189 to 199 (PEGHYNWHHGA) are dimerization of the capsid protein. Ser-219 functions as the Charge relay system in the catalytic mechanism. Positions 225 to 229 (DNKGR) are dimerization of the capsid protein. Over 268–701 (SAPLITAMCV…YGLYPAATVS (434 aa)) the chain is Extracellular. 3 disulfides stabilise this stretch: Cys-276–Cys-285, Cys-290–Cys-294, and Cys-293–Cys-325. Residue Asn-280 is glycosylated (N-linked (GlcNAc...) asparagine; by host). An N-linked (GlcNAc...) asparagine; by host glycan is attached at Asn-327. 6 disulfide bridges follow: Cys-352/Cys-458, Cys-355/Cys-361, Cys-424/Cys-438, Cys-486/Cys-598, Cys-534/Cys-558, and Cys-536/Cys-553. An N-linked (GlcNAc...) asparagine; by host glycan is attached at Asn-533. Residue Asn-595 is glycosylated (N-linked (GlcNAc...) asparagine; by host). Residues 702-722 (AVVGMSLLALISIFASCYMLV) form a helical membrane-spanning segment. Residue Cys-718 is the site of S-stearoyl cysteine; by host attachment. Residues 723-727 (AARSK) are interaction with the capsid protein. Residues 723–755 (AARSKCLTPYALTPGAAVPWTLGILCCAPRAHA) are Cytoplasmic-facing. Cys-728 is lipidated: S-stearoyl cysteine; by host. Residues 728-748 (CLTPYALTPGAAVPWTLGILC) form a transient transmembrane before p62-6K protein processing region. Cys-728 and Cys-749 form a disulfide bridge. 2 S-palmitoyl cysteine; by host lipidation sites follow: Cys-748 and Cys-749. At 756-770 (ASVAETMAYLWDQNQ) the chain is on the extracellular side. Residues 771-791 (ALFWLEFAAPVACILIITYCL) traverse the membrane as a helical segment. Position 792 (Arg-792) is a topological domain, cytoplasmic. Residues 793–813 (NVLCCCKSLSFLVLLSLGATA) traverse the membrane as a helical segment. Topologically, residues 814-1230 (RAYEHSTVMP…ALSWVQKISG (417 aa)) are extracellular. Cystine bridges form between Cys-864–Cys-929, Cys-877–Cys-909, Cys-878–Cys-911, and Cys-883–Cys-893. The E1 fusion peptide loop stretch occupies residues 899-916 (VYPFMWGGAYCFCDSENT). N-linked (GlcNAc...) asparagine; by host glycosylation is found at Asn-956 and Asn-1085. 4 cysteine pairs are disulfide-bonded: Cys-1074–Cys-1086, Cys-1116–Cys-1191, Cys-1121–Cys-1195, and Cys-1143–Cys-1185. Residues 1112–1192 (IDLTCTVATC…SLCSARATCS (81 aa)) form an E1-DIII; interaction with host receptor VLDLR region. Residues 1231-1251 (GLGAFAIGAILVLVVVTCIGL) traverse the membrane as a helical segment. Cys-1248 carries S-stearoyl cysteine; by host lipidation. Residues 1252 to 1253 (RR) are Cytoplasmic-facing.

Homodimer. Homomultimer. Interacts with host karyopherin KPNA4; this interaction allows the nuclear import of the viral capsid protein. Interacts with spike glycoprotein E2. Interacts with host IRAK1; the interaction leads to inhibition of IRAK1-dependent signaling. As to quaternary structure, the precursor of protein E3/E2 and E1 form a heterodimer shortly after synthesis. In terms of assembly, the precursor of protein E3/E2 and E1 form a heterodimer shortly after synthesis. Processing of the precursor of protein E3/E2 into E2 and E3 results in a heterodimer of the spike glycoproteins E2 and E1. Spike at virion surface are constituted of a trimer of E2-E1 heterodimers. E2-E1 heterodimers interact with host VLDLR or LRP8/APOER2 to mediate viral entry. After target cell attachment and endocytosis, E1 change conformation to form homotrimers. Interacts with 6K protein. Interacts (via E1-DIII) with host VLDLR (via class A repeats); this interaction mediates viral entry into host cell. Interacts with spike glycoprotein E1. Processing of the precursor of protein E3/E2 into E2 and E3 results in a heterodimer of the spike glycoproteins E2 and E1. Spike at virion surface are constituted of a trimer of E2-E1 heterodimers. E2-E1 heterodimers interact with host VLDLR or LRP8/APOER2 to mediate viral entry. Interacts with 6K protein. As to quaternary structure, oligomer. Interacts with spike glycoprotein E1. Interacts with spike glycoprotein E2. In terms of processing, specific enzymatic cleavages in vivo yield mature proteins. Capsid protein is auto-cleaved during polyprotein translation, unmasking a signal peptide at the N-terminus of the precursor of E3/E2. The remaining polyprotein is then targeted to the host endoplasmic reticulum, where host signal peptidase cleaves it into pE2, 6K and E1 proteins. pE2 is further processed to mature E3 and E2 by host furin in trans-Golgi vesicle. Protein processing process takes about 30 minutes at physiologic temperatures. The folding of the p62/6K/E1 precursor requires the formation of intrachain disulfide bonds and has been shown to involve a transient covalent interaction between the nascent and newly synthesized heterodimer and the host-cell chaperones, P4HB/PDI and PDIA3/ERp57. The folding pathway also includes non covalent interaction with human CANX/calnexin and CALR/calreticulin. Post-translationally, palmitoylated via thioester bonds. These palmitoylations may induce disruption of the C-terminus transmembrane. This would result in the reorientation of E2 C-terminus from lumenal to cytoplasmic side. Envelope E1, E2 and E3 proteins are N-glycosylated. In terms of processing, stearoylated. Post-translationally, palmitoylated via thioester bonds with about four covalently bound fatty acids per molecule.

It localises to the virion. The protein resides in the host cytoplasm. It is found in the host cell membrane. Its subcellular location is the host nucleus. The protein localises to the virion membrane. It localises to the host Golgi apparatus. The protein resides in the host trans-Golgi network. It is found in the host endoplasmic reticulum. It catalyses the reaction Autocatalytic release of the core protein from the N-terminus of the togavirus structural polyprotein by hydrolysis of a -Trp-|-Ser- bond.. Its function is as follows. Forms an icosahedral capsid with a T=4 symmetry composed of 240 copies of the capsid protein surrounded by a lipid membrane through which penetrate 80 spikes composed of trimers of E1-E2 heterodimers. The capsid protein binds to the viral RNA genome at a site adjacent to a ribosome binding site for viral genome translation following genome release. Possesses a protease activity that results in its autocatalytic cleavage from the nascent structural protein. Following its self-cleavage, the capsid protein transiently associates with ribosomes, and within several minutes the protein binds to viral RNA and rapidly assembles into icosahedric core particles. The resulting nucleocapsid eventually associates with the cytoplasmic domain of the spike glycoprotein E2 at the cell membrane, leading to budding and formation of mature virions. In case of infection, new virions attach to target cells and after clathrin-mediated endocytosis their membrane fuses with the host endosomal membrane. This leads to the release of the nucleocapsid into the cytoplasm, followed by an uncoating event necessary for the genomic RNA to become accessible. The uncoating might be triggered by the interaction of capsid proteins with ribosomes. Binding of ribosomes would release the genomic RNA since the same region is genomic RNA-binding and ribosome-binding. Specifically inhibits interleukin-1 receptor-associated kinase 1/IRAK1-dependent signaling during viral entry, representing a means by which the alphaviruses may evade innate immune detection and activation prior to viral gene expression. Functionally, provides the signal sequence for the translocation of the precursor of protein E3/E2 to the host endoplasmic reticulum. Furin-cleaved E3 remains associated with spike glycoprotein E1 and mediates pH protection of the latter during the transport via the secretory pathway. After virion release from the host cell, the assembly protein E3 is gradually released in the extracellular space. In terms of biological role, plays a role in viral attachment to target host cell, by binding to the cell receptors VLDLR or LRP8/APOER2. The host LDLR can act as a cell receptor for viral entry. Synthesized as a p62 precursor which is processed by furin at the cell membrane just before virion budding, giving rise to E2-E1 heterodimer. The p62-E1 heterodimer is stable, whereas E2-E1 is unstable and dissociate at low pH. p62 is processed at the last step, presumably to avoid E1 fusion activation before its final export to cell surface. E2 C-terminus contains a transitory transmembrane that would be disrupted by palmitoylation, resulting in reorientation of the C-terminal tail from lumenal to cytoplasmic side. This step is critical since E2 C-terminus is involved in budding by interacting with capsid proteins. This release of E2 C-terminus in cytoplasm occurs lately in protein export, and precludes premature assembly of particles at the endoplasmic reticulum membrane. Acts as a viroporin that participates in virus glycoprotein processing and transport to the plasma membrane, cell permeabilization and budding of viral particles. Disrupts the calcium homeostasis of the cell, probably at the endoplasmic reticulum level. This leads to cytoplasmic calcium elevation. Because of its lipophilic properties, the 6K protein is postulated to influence the selection of lipids that interact with the transmembrane domains of the glycoproteins, which, in turn, affects the deformability of the bilayer required for the extreme curvature that occurs as budding proceeds. Present in low amount in virions, about 3% compared to viral glycoproteins. Its function is as follows. Class II viral fusion protein. Fusion activity is inactive as long as E1 is bound to E2 in mature virion. After virus attachment to target cell via host VLDLR or LRP8/APOER2 and endocytosis, acidification of the endosome induces dissociation of E1/E2 heterodimer and concomitant trimerization of the E1 subunits. This E1 trimer is fusion active, and promotes release of viral nucleocapsid in cytoplasm after endosome and viral membrane fusion. Efficient fusion requires the presence of cholesterol and sphingolipid in the target membrane. Fusion is optimal at levels of about 1 molecule of cholesterol per 2 molecules of phospholipids, and is specific for sterols containing a 3-beta-hydroxyl group. This is Structural polyprotein from Aedes (Middle-African hedgehog).